The primary structure comprises 158 residues: Deoxyuridine 5'-triphosphate nucleotidohydrolase (158 aa).

Residues 66 to 68, N79, 83 to 85, and K93 contribute to the substrate site; these read RSG and TID. The disordered stretch occupies residues 139–158; the sequence is RGFGSSGVARKGHYQGKPLA.

It belongs to the dUTPase family. Mg(2+) is required as a cofactor.

The enzyme catalyses dUTP + H2O = dUMP + diphosphate + H(+). Its pathway is pyrimidine metabolism; dUMP biosynthesis; dUMP from dCTP (dUTP route): step 2/2. This enzyme is involved in nucleotide metabolism: it produces dUMP, the immediate precursor of thymidine nucleotides and it decreases the intracellular concentration of dUTP so that uracil cannot be incorporated into DNA. The sequence is that of Deoxyuridine 5'-triphosphate nucleotidohydrolase from Helicobacter hepaticus (strain ATCC 51449 / 3B1).